Here is a 266-residue protein sequence, read N- to C-terminus: ATP synthase subunit a (266 aa).

5 helical membrane passes run 28 to 48 (SINV…LVIF), 88 to 108 (LIAP…MMDL), 141 to 161 (DVNI…FYSI), 206 to 226 (LFGN…LLPW), and 237 to 257 (AIFH…LTVV).

It belongs to the ATPase A chain family. As to quaternary structure, F-type ATPases have 2 components, CF(1) - the catalytic core - and CF(0) - the membrane proton channel. CF(1) has five subunits: alpha(3), beta(3), gamma(1), delta(1), epsilon(1). CF(0) has three main subunits: a(1), b(2) and c(9-12). The alpha and beta chains form an alternating ring which encloses part of the gamma chain. CF(1) is attached to CF(0) by a central stalk formed by the gamma and epsilon chains, while a peripheral stalk is formed by the delta and b chains.

It localises to the cell inner membrane. Functionally, key component of the proton channel; it plays a direct role in the translocation of protons across the membrane. The chain is ATP synthase subunit a from Pectobacterium atrosepticum (strain SCRI 1043 / ATCC BAA-672) (Erwinia carotovora subsp. atroseptica).